Here is a 921-residue protein sequence, read N- to C-terminus: DNA ligase (921 aa).

NAD(+)-binding positions include 90–94 (DAAYD), 139–140 (SL), and Glu173. The N6-AMP-lysine intermediate role is filled by Lys175. Residues Arg196, Glu235, Lys360, and Lys384 each contribute to the NAD(+) site. Zn(2+)-binding residues include Cys481, Cys484, Cys500, and Cys506. A disordered region spans residues 663–688 (EAAIESAETQGGAASETTGAPTGAEA). In terms of domain architecture, BRCT spans 839-921 (SLPQTLAGKT…AQLLETGSID (83 aa)).

Belongs to the NAD-dependent DNA ligase family. LigA subfamily. It depends on Mg(2+) as a cofactor. Requires Mn(2+) as cofactor.

The enzyme catalyses NAD(+) + (deoxyribonucleotide)n-3'-hydroxyl + 5'-phospho-(deoxyribonucleotide)m = (deoxyribonucleotide)n+m + AMP + beta-nicotinamide D-nucleotide.. In terms of biological role, DNA ligase that catalyzes the formation of phosphodiester linkages between 5'-phosphoryl and 3'-hydroxyl groups in double-stranded DNA using NAD as a coenzyme and as the energy source for the reaction. It is essential for DNA replication and repair of damaged DNA. In Bifidobacterium longum subsp. infantis (strain ATCC 15697 / DSM 20088 / JCM 1222 / NCTC 11817 / S12), this protein is DNA ligase.